A 191-amino-acid polypeptide reads, in one-letter code: Thymidine kinase (191 aa).

Residues 15 to 22 (GPMYSGKT) and 88 to 91 (DEAQ) contribute to the ATP site. Residue glutamate 89 is the Proton acceptor of the active site. The Zn(2+) site is built by cysteine 145, cysteine 148, cysteine 183, and cysteine 186.

The protein belongs to the thymidine kinase family. As to quaternary structure, homotetramer.

The protein localises to the cytoplasm. The enzyme catalyses thymidine + ATP = dTMP + ADP + H(+). The polypeptide is Thymidine kinase (Clostridium botulinum (strain Kyoto / Type A2)).